The sequence spans 383 residues: Dihydroorotase (383 aa).

The Zn(2+) site is built by H47 and H49. Residues 49-51 (HFR) and N81 each bind substrate. Zn(2+)-binding residues include K128, H159, H198, and D264. K128 is subject to N6-carboxylysine. D264 is a catalytic residue. Residues H268 and 280–281 (PG) each bind substrate.

It belongs to the metallo-dependent hydrolases superfamily. DHOase family. Class I DHOase subfamily. The cofactor is Zn(2+).

It carries out the reaction (S)-dihydroorotate + H2O = N-carbamoyl-L-aspartate + H(+). It functions in the pathway pyrimidine metabolism; UMP biosynthesis via de novo pathway; (S)-dihydroorotate from bicarbonate: step 3/3. In terms of biological role, catalyzes the reversible cyclization of carbamoyl aspartate to dihydroorotate. In Pyrobaculum aerophilum (strain ATCC 51768 / DSM 7523 / JCM 9630 / CIP 104966 / NBRC 100827 / IM2), this protein is Dihydroorotase.